Here is a 222-residue protein sequence, read N- to C-terminus: uncharacterized protein (222 aa).

Residues 1-20 (MRTTSFAKVAALCGLLALSG) form the signal peptide. Residue Cys21 is the site of N-palmitoyl cysteine attachment. Cys21 is lipidated: S-diacylglycerol cysteine.

Its subcellular location is the cell membrane. This is an uncharacterized protein from Escherichia coli O157:H7.